Reading from the N-terminus, the 440-residue chain is KH domain-containing protein 3 (440 aa).

The involved in RNA binding stretch occupies residues 1–39 (MASLKRFQTLVPLDHKQGTLFEIIGEPKLPKWFHVECLE). In terms of domain architecture, KH; atypical spans 40–118 (DPKRLYVEPR…CRMKLMEIEA (79 aa)). Residues 132 to 201 (KAATQPAPVK…EVREAATEQA (70 aa)) are disordered. Ser151 bears the Phosphoserine; by ATR mark. A phosphothreonine mark is found at Thr274 and Thr286. Positions 341–440 (VREAATQLSP…RDAWESFIIL (100 aa)) are required for interaction with NUMA1 and regulation of apoptosis in response to DNA damage. Ser349 bears the Phosphoserine mark.

This sequence belongs to the KHDC1 family. Component of the subcortical maternal complex (SCMC), at least composed of NLRP5, KHDC3, OOEP, and TLE6. Within the complex, interacts with NLRP5, OOEP and TLE6. The SCMC may facilitate translocation of its components between the nuclear and cytoplasmic compartments. Forms a scaffold complex with OOEP/FLOPED, and interacts with BLM and TRIM25 at DNA replication forks. Interacts with PARP1; the interaction is increased following the formation of DNA double-strand breaks. Interacts (via C-terminus) with NUMA1. In terms of processing, phosphorylation at Ser-151 is required to promote stalled fork restart. Detected in ovary, but not in testis or somatic tissues. In the ovary, expressed in growing oocytes.

It is found in the cytoplasm. Its subcellular location is the cell cortex. The protein localises to the nucleus. It localises to the mitochondrion. The protein resides in the cytoskeleton. It is found in the microtubule organizing center. Its subcellular location is the centrosome. The protein localises to the chromosome. Its function is as follows. Component of the subcortical maternal complex (SCMC), a multiprotein complex that plays a key role in early embryonic development. The SCMC complex is a structural constituent of cytoplasmic lattices, which consist in fibrous structures found in the cytoplasm of oocytes and preimplantation embryos. They are required to store maternal proteins critical for embryonic development, such as proteins that control epigenetic reprogramming of the preimplantation embryo, and prevent their degradation or activation. KHDC3 ensures proper spindle assembly by regulating the localization of AURKA via RHOA signaling and of PLK1 via a RHOA-independent process. Required for the localization of MAD2L1 to kinetochores to enable spindle assembly checkpoint function. As part of the OOEP-KHDC3 scaffold, recruits BLM and TRIM25 to DNA replication forks, thereby promoting the ubiquitination of BLM by TRIM25, enhancing BLM retainment at replication forks and therefore promoting stalled replication fork restart. Regulates homologous recombination-mediated DNA repair via recruitment of RAD51 to sites of DNA double-strand breaks, and sustainment of PARP1 activity, which in turn modulates downstream ATM or ATR activation. Activation of ATM or ATR in response to DNA double-strand breaks may be cell-type specific. Its role in DNA double-strand break repair is independent of its role in restarting stalled replication forks. Promotes neural stem cell neurogenesis and neuronal differentiation in the hippocampus. May regulate normal development of learning, memory and anxiety. Capable of binding RNA. This chain is KH domain-containing protein 3, found in Mus musculus (Mouse).